Here is a 130-residue protein sequence, read N- to C-terminus: Small ribosomal subunit protein uS9 (130 aa).

Residues 109–130 are disordered; sequence RAKERKKYGLYGARRSPQFTKR.

This sequence belongs to the universal ribosomal protein uS9 family.

This chain is Small ribosomal subunit protein uS9, found in Malacoplasma penetrans (strain HF-2) (Mycoplasma penetrans).